A 539-amino-acid polypeptide reads, in one-letter code: CTP synthase (539 aa).

An amidoligase domain region spans residues 1-268 (MADTKYIFVT…DETVLRKVGL (268 aa)). CTP is bound at residue serine 15. Serine 15 provides a ligand contact to UTP. Residue 16–21 (SLGKGI) coordinates ATP. Tyrosine 56 contributes to the L-glutamine binding site. Aspartate 73 is a binding site for ATP. 2 residues coordinate Mg(2+): aspartate 73 and glutamate 143. CTP contacts are provided by residues 150–152 (DIE), 189–194 (KTKPTQ), and lysine 225. UTP contacts are provided by residues 189–194 (KTKPTQ) and lysine 225. The region spanning 294-536 (TIALVGKYVE…IREAIKTRKK (243 aa)) is the Glutamine amidotransferase type-1 domain. Residue glycine 356 coordinates L-glutamine. The active-site Nucleophile; for glutamine hydrolysis is the cysteine 383. L-glutamine-binding positions include 384–387 (LGMQ), glutamate 407, and arginine 464. Catalysis depends on residues histidine 509 and glutamate 511.

It belongs to the CTP synthase family. In terms of assembly, homotetramer.

The catalysed reaction is UTP + L-glutamine + ATP + H2O = CTP + L-glutamate + ADP + phosphate + 2 H(+). The enzyme catalyses L-glutamine + H2O = L-glutamate + NH4(+). It carries out the reaction UTP + NH4(+) + ATP = CTP + ADP + phosphate + 2 H(+). It functions in the pathway pyrimidine metabolism; CTP biosynthesis via de novo pathway; CTP from UDP: step 2/2. With respect to regulation, allosterically activated by GTP, when glutamine is the substrate; GTP has no effect on the reaction when ammonia is the substrate. The allosteric effector GTP functions by stabilizing the protein conformation that binds the tetrahedral intermediate(s) formed during glutamine hydrolysis. Inhibited by the product CTP, via allosteric rather than competitive inhibition. In terms of biological role, catalyzes the ATP-dependent amination of UTP to CTP with either L-glutamine or ammonia as the source of nitrogen. Regulates intracellular CTP levels through interactions with the four ribonucleotide triphosphates. The protein is CTP synthase of Porphyromonas gingivalis (strain ATCC BAA-308 / W83).